We begin with the raw amino-acid sequence, 486 residues long: 23S rRNA (uracil(1939)-C(5))-methyltransferase RlmD (486 aa).

The 63-residue stretch at 14–76 (AAQDGSGLPE…NHWEQANLTA (63 aa)) folds into the TRAM domain. The [4Fe-4S] cluster site is built by Cys89, Cys99, Cys102, and Cys181. The S-adenosyl-L-methionine site is built by Gln289, Phe318, Asn323, Glu339, Asn374, and Asp395. Cys442 functions as the Nucleophile in the catalytic mechanism.

This sequence belongs to the class I-like SAM-binding methyltransferase superfamily. RNA M5U methyltransferase family. RlmD subfamily.

The catalysed reaction is uridine(1939) in 23S rRNA + S-adenosyl-L-methionine = 5-methyluridine(1939) in 23S rRNA + S-adenosyl-L-homocysteine + H(+). Its function is as follows. Catalyzes the formation of 5-methyl-uridine at position 1939 (m5U1939) in 23S rRNA. The protein is 23S rRNA (uracil(1939)-C(5))-methyltransferase RlmD of Verminephrobacter eiseniae (strain EF01-2).